A 173-amino-acid polypeptide reads, in one-letter code: MTLEEIKMMIREIPDFPKKGIKFKDITPVLKDAQAFNYSIEMLAKALEGRKFDLIAAPEARGFLFGAPLAYRLGVGFVPVRKPGKLPAETLSYEYELEYGTDSLEIHKDAVLEGQRVVIVDDLLATGGTIYASAKLVEKLGGIVDSIIFLSELTFLDGRKKLDGYDIISLIKF.

It belongs to the purine/pyrimidine phosphoribosyltransferase family. Homodimer.

It localises to the cytoplasm. It carries out the reaction AMP + diphosphate = 5-phospho-alpha-D-ribose 1-diphosphate + adenine. The protein operates within purine metabolism; AMP biosynthesis via salvage pathway; AMP from adenine: step 1/1. Its function is as follows. Catalyzes a salvage reaction resulting in the formation of AMP, that is energically less costly than de novo synthesis. This is Adenine phosphoribosyltransferase from Thermoanaerobacter sp. (strain X514).